A 90-amino-acid polypeptide reads, in one-letter code: Actobindin-B/C (90 aa).

2 consecutive WH2 domains span residues 4–21 and 40–57; these read TANPLLAEINKGTDLKHA and DHSSLLGEVEKGAQLKHV. The disordered stretch occupies residues 57-90; that stretch reads VETQDRSAPVTEGATVKSNNHSALLGEIKSKAQE.

In terms of assembly, monomer.

In terms of biological role, is able to bind two actin monomers at high concentrations of G-actin. Inhibits actin polymerization by sequestering G-actin and stabilizing actin dimers. The polypeptide is Actobindin-B/C (abnB) (Dictyostelium discoideum (Social amoeba)).